A 245-amino-acid chain; its full sequence is MKVTVVYYPGDPAAKGAAEALEREYGIKALELPEDPPFFDFNSLAGDAFIVLSRHSSEKRVKAFTVHHTGNFGEAKLGGEPKRLGVAYPSLACSLLRAMNAFRREGYDVTYEATHHGPTSDKPLVFAEIGSVKEDWEDPANHEVLAKAVASWEEHRCEAPKAVWVGGPHYSKRATKRCLEGEACFGHIAPKYALDHLDEDLLRQMVERSFERPERAYVEKKSLKSELRLRVVKALEDLGLEVLVV.

This sequence belongs to the DtdA deacylase family. Monomer. Zn(2+) is required as a cofactor.

It catalyses the reaction a D-aminoacyl-tRNA + H2O = a tRNA + a D-alpha-amino acid + H(+). It carries out the reaction glycyl-tRNA(Ala) + H2O = tRNA(Ala) + glycine + H(+). Its function is as follows. D-aminoacyl-tRNA deacylase with broad substrate specificity. By recycling D-aminoacyl-tRNA to D-amino acids and free tRNA molecules, this enzyme counteracts the toxicity associated with the formation of D-aminoacyl-tRNA entities in vivo. In Ignicoccus hospitalis (strain KIN4/I / DSM 18386 / JCM 14125), this protein is D-aminoacyl-tRNA deacylase.